The sequence spans 108 residues: UPF0145 protein Tery_3795 (108 aa).

It belongs to the UPF0145 family.

In Trichodesmium erythraeum (strain IMS101), this protein is UPF0145 protein Tery_3795.